The following is a 1098-amino-acid chain: Gramicidin S synthase 1 (1098 aa).

Residues 538–612 enclose the Carrier domain; that stretch reads APRNEIEETL…QLVHYIKDSK (75 aa). Ser-573 carries the post-translational modification O-(pantetheine 4'-phosphoryl)serine.

Belongs to the ATP-dependent AMP-binding enzyme family. As to quaternary structure, large multienzyme complex of GrsA and GrsB. Requires pantetheine 4'-phosphate as cofactor.

The enzyme catalyses L-phenylalanine + ATP + H2O = D-phenylalanine + AMP + diphosphate + H(+). The protein operates within antibiotic biosynthesis; gramicidin S biosynthesis. In terms of biological role, in the first step of peptide synthesis this enzyme activates phenylalanine and racemizes it to the D-isomer. The sequence is that of Gramicidin S synthase 1 (grsA) from Brevibacillus brevis (Bacillus brevis).